A 489-amino-acid chain; its full sequence is UDP-N-acetylmuramate--L-alanine ligase (489 aa).

130–136 (GTHGKTS) is an ATP binding site.

It belongs to the MurCDEF family.

Its subcellular location is the cytoplasm. The enzyme catalyses UDP-N-acetyl-alpha-D-muramate + L-alanine + ATP = UDP-N-acetyl-alpha-D-muramoyl-L-alanine + ADP + phosphate + H(+). It participates in cell wall biogenesis; peptidoglycan biosynthesis. In terms of biological role, cell wall formation. This is UDP-N-acetylmuramate--L-alanine ligase from Corynebacterium efficiens (strain DSM 44549 / YS-314 / AJ 12310 / JCM 11189 / NBRC 100395).